A 1207-amino-acid polypeptide reads, in one-letter code: DNA-directed RNA polymerase subunit beta' (1207 aa).

Residues C60, C62, C75, and C78 each contribute to the Zn(2+) site. Mg(2+) contacts are provided by D449, D451, and D453. Residues C822, C896, C903, and C906 each contribute to the Zn(2+) site.

This sequence belongs to the RNA polymerase beta' chain family. In terms of assembly, the RNAP catalytic core consists of 2 alpha, 1 beta, 1 beta' and 1 omega subunit. When a sigma factor is associated with the core the holoenzyme is formed, which can initiate transcription. It depends on Mg(2+) as a cofactor. Zn(2+) is required as a cofactor.

The enzyme catalyses RNA(n) + a ribonucleoside 5'-triphosphate = RNA(n+1) + diphosphate. In terms of biological role, DNA-dependent RNA polymerase catalyzes the transcription of DNA into RNA using the four ribonucleoside triphosphates as substrates. The sequence is that of DNA-directed RNA polymerase subunit beta' from Staphylococcus aureus (strain USA300).